Here is a 332-residue protein sequence, read N- to C-terminus: L-lactate dehydrogenase A chain (332 aa).

Residues 29 to 57 and Arg-99 contribute to the NAD(+) site; that span reads GAVGMACAISILMKDLADELALVDVIEDK. 3 residues coordinate substrate: Arg-106, Asn-138, and Arg-169. Asn-138 provides a ligand contact to NAD(+). Residue His-193 is the Proton acceptor of the active site. Residue Thr-248 participates in substrate binding.

This sequence belongs to the LDH/MDH superfamily. LDH family. As to quaternary structure, homotetramer.

The protein localises to the cytoplasm. The enzyme catalyses (S)-lactate + NAD(+) = pyruvate + NADH + H(+). Its pathway is fermentation; pyruvate fermentation to lactate; (S)-lactate from pyruvate: step 1/1. In terms of biological role, interconverts simultaneously and stereospecifically pyruvate and lactate with concomitant interconversion of NADH and NAD(+). The polypeptide is L-lactate dehydrogenase A chain (LDHA) (Trachemys scripta elegans (Red-eared slider turtle)).